The chain runs to 331 residues: Pantothenate kinase (331 aa).

ATP is bound at residue 109–116 (GSVAVGKS).

It belongs to the prokaryotic pantothenate kinase family.

The protein localises to the cytoplasm. It catalyses the reaction (R)-pantothenate + ATP = (R)-4'-phosphopantothenate + ADP + H(+). It participates in cofactor biosynthesis; coenzyme A biosynthesis; CoA from (R)-pantothenate: step 1/5. The chain is Pantothenate kinase from Sinorhizobium medicae (strain WSM419) (Ensifer medicae).